We begin with the raw amino-acid sequence, 303 residues long: Diaminopimelate epimerase (303 aa).

The substrate site is built by N15, Q47, and N67. The active-site Proton donor is the C76. Residues 77-78 (GN), N163, N197, and 215-216 (ER) each bind substrate. C224 functions as the Proton acceptor in the catalytic mechanism. A substrate-binding site is contributed by 225-226 (GS). The tract at residues 278–303 (FDPATGEWSRDTQGLQGSGNADRGAA) is disordered.

Belongs to the diaminopimelate epimerase family. Homodimer.

It is found in the cytoplasm. It catalyses the reaction (2S,6S)-2,6-diaminopimelate = meso-2,6-diaminopimelate. The protein operates within amino-acid biosynthesis; L-lysine biosynthesis via DAP pathway; DL-2,6-diaminopimelate from LL-2,6-diaminopimelate: step 1/1. Its function is as follows. Catalyzes the stereoinversion of LL-2,6-diaminopimelate (L,L-DAP) to meso-diaminopimelate (meso-DAP), a precursor of L-lysine and an essential component of the bacterial peptidoglycan. The sequence is that of Diaminopimelate epimerase from Brucella abortus (strain S19).